We begin with the raw amino-acid sequence, 425 residues long: Probable aminotransferase tcpI (425 aa).

K256 is modified (N6-(pyridoxal phosphate)lysine).

It belongs to the class-I pyridoxal-phosphate-dependent aminotransferase family. Pyridoxal 5'-phosphate serves as cofactor.

It functions in the pathway secondary metabolite biosynthesis. Functionally, probable aminotransferase; part of the gene cluster that mediates the biosynthesis of an unusual class of epipolythiodioxopiperazines (ETPs) lacking the reactive thiol group important for toxicity. Firstly, L-tyrosine is prenylated by tcpD, before undergoing condensation with L-glycine in a reaction catalyzed by the NRPS tcpP leading to the diketopiperazine (DKP) backbone. Afterwards the alpha-carbon of tyrosine is oxidized by the cytochrome P450 tcpC to form a hydroxyl group. However, in contrast other ETP biosynthesis pathways studied so far, tcpC is not able to bishydroxylate the DKP at both alpha-carbon positions, but hydroxylates the alpha-carbon of the tyrosine part and the nitrogen of the glycine part. The next steps involve an alpha,beta-elimination reaction catalyzed by tcpI, a methylation by the methyltransferase tcpN the action of the four enzyme cascade tcpG/K/J/I. Due to a dysfunctional cytochrome P450 monooxygenase tcpC, the pathway leads to the biosynthesis of probable non-toxic metabolites lacking the reactive thiol group. The sequence is that of Probable aminotransferase tcpI from Claviceps purpurea (strain 20.1) (Ergot fungus).